Here is a 92-residue protein sequence, read N- to C-terminus: Small ribosomal subunit protein uS19 (92 aa).

The protein belongs to the universal ribosomal protein uS19 family.

In terms of biological role, protein S19 forms a complex with S13 that binds strongly to the 16S ribosomal RNA. The chain is Small ribosomal subunit protein uS19 from Bacillus thuringiensis subsp. konkukian (strain 97-27).